The primary structure comprises 59 residues: Large ribosomal subunit protein bL32 (59 aa).

Residues 1–21 (MAVPKKKSSKSKGRSRAAHHA) are disordered.

The protein belongs to the bacterial ribosomal protein bL32 family.

The sequence is that of Large ribosomal subunit protein bL32 from Magnetococcus marinus (strain ATCC BAA-1437 / JCM 17883 / MC-1).